The following is a 201-amino-acid chain: FMN-dependent NADH:quinone oxidoreductase (201 aa).

Residues Ser-9 and Ser-16 to Ser-18 each bind FMN.

Belongs to the azoreductase type 1 family. Homodimer. FMN is required as a cofactor.

The enzyme catalyses 2 a quinone + NADH + H(+) = 2 a 1,4-benzosemiquinone + NAD(+). The catalysed reaction is N,N-dimethyl-1,4-phenylenediamine + anthranilate + 2 NAD(+) = 2-(4-dimethylaminophenyl)diazenylbenzoate + 2 NADH + 2 H(+). Functionally, quinone reductase that provides resistance to thiol-specific stress caused by electrophilic quinones. Also exhibits azoreductase activity. Catalyzes the reductive cleavage of the azo bond in aromatic azo compounds to the corresponding amines. The polypeptide is FMN-dependent NADH:quinone oxidoreductase (Mesomycoplasma hyopneumoniae (strain J / ATCC 25934 / NCTC 10110) (Mycoplasma hyopneumoniae)).